A 360-amino-acid chain; its full sequence is Histidinol-phosphate aminotransferase (360 aa).

Lys-221 bears the N6-(pyridoxal phosphate)lysine mark.

Belongs to the class-II pyridoxal-phosphate-dependent aminotransferase family. Histidinol-phosphate aminotransferase subfamily. As to quaternary structure, homodimer. Requires pyridoxal 5'-phosphate as cofactor.

The enzyme catalyses L-histidinol phosphate + 2-oxoglutarate = 3-(imidazol-4-yl)-2-oxopropyl phosphate + L-glutamate. It participates in amino-acid biosynthesis; L-histidine biosynthesis; L-histidine from 5-phospho-alpha-D-ribose 1-diphosphate: step 7/9. This chain is Histidinol-phosphate aminotransferase, found in Desulfitobacterium hafniense (strain DSM 10664 / DCB-2).